The sequence spans 498 residues: ATP synthase subunit beta, chloroplastic (498 aa).

172 to 179 (GGAGVGKT) is an ATP binding site.

It belongs to the ATPase alpha/beta chains family. As to quaternary structure, F-type ATPases have 2 components, CF(1) - the catalytic core - and CF(0) - the membrane proton channel. CF(1) has five subunits: alpha(3), beta(3), gamma(1), delta(1), epsilon(1). CF(0) has four main subunits: a(1), b(1), b'(1) and c(9-12).

Its subcellular location is the plastid. The protein resides in the chloroplast thylakoid membrane. It catalyses the reaction ATP + H2O + 4 H(+)(in) = ADP + phosphate + 5 H(+)(out). Produces ATP from ADP in the presence of a proton gradient across the membrane. The catalytic sites are hosted primarily by the beta subunits. The protein is ATP synthase subunit beta, chloroplastic of Gossypium hirsutum (Upland cotton).